The following is a 185-amino-acid chain: Ribosome-recycling factor (185 aa).

It belongs to the RRF family.

Its subcellular location is the cytoplasm. Functionally, responsible for the release of ribosomes from messenger RNA at the termination of protein biosynthesis. May increase the efficiency of translation by recycling ribosomes from one round of translation to another. This is Ribosome-recycling factor from Francisella tularensis subsp. holarctica (strain FTNF002-00 / FTA).